The following is an 83-amino-acid chain: Subtilisin-chymotrypsin inhibitor CI-1A (83 aa).

A disordered region spans residues 1–24 (MSSMEGSVLKYPEPTEGSIGASSA).

This sequence belongs to the protease inhibitor I13 (potato type I serine protease inhibitor) family.

Its function is as follows. Inhibits both subtilisin and chymotrypsin. The polypeptide is Subtilisin-chymotrypsin inhibitor CI-1A (Hordeum vulgare (Barley)).